A 605-amino-acid polypeptide reads, in one-letter code: Elongation factor 4 (605 aa).

The tr-type G domain maps to 5 to 187; that stretch reads ALIRNFSIIA…AVVERIPPPK (183 aa). GTP is bound by residues 17 to 22 and 134 to 137; these read DHGKST and NKID.

The protein belongs to the TRAFAC class translation factor GTPase superfamily. Classic translation factor GTPase family. LepA subfamily.

It is found in the cell inner membrane. It catalyses the reaction GTP + H2O = GDP + phosphate + H(+). Functionally, required for accurate and efficient protein synthesis under certain stress conditions. May act as a fidelity factor of the translation reaction, by catalyzing a one-codon backward translocation of tRNAs on improperly translocated ribosomes. Back-translocation proceeds from a post-translocation (POST) complex to a pre-translocation (PRE) complex, thus giving elongation factor G a second chance to translocate the tRNAs correctly. Binds to ribosomes in a GTP-dependent manner. This is Elongation factor 4 from Novosphingobium aromaticivorans (strain ATCC 700278 / DSM 12444 / CCUG 56034 / CIP 105152 / NBRC 16084 / F199).